The chain runs to 75 residues: UPF0729 protein C18orf32 homolog (75 aa).

The interval 1-37 (MVCIPCIVIPVLLWVYKRFLEPVLYPIISPIISRFWR) is necessary for its localzation to the endoplasmic reticulum and lipid droplets. Polar residues predominate over residues 43 to 65 (DTPQQKTSTAECNGAANGSTANG). Residues 43 to 75 (DTPQQKTSTAECNGAANGSTANGPKTVADKKAD) are disordered.

This sequence belongs to the UPF0729 family.

The protein resides in the endoplasmic reticulum. Its subcellular location is the lipid droplet. The sequence is that of UPF0729 protein C18orf32 homolog from Danio rerio (Zebrafish).